Reading from the N-terminus, the 416-residue chain is Solute carrier family 25 member 46 (416 aa).

Positions 1-13 (MQPRRPDRFDGLE) are enriched in basic and acidic residues. The disordered stretch occupies residues 1 to 91 (MQPRRPDRFD…GEESSSSSSG (91 aa)). The segment covering 37–49 (SFSSSGDLSQHWV) has biased composition (polar residues). A compositionally biased stretch (low complexity) spans 82–91 (GEESSSSSSG). The stretch at 94–185 (HLNRFAGFGI…GMLSEFTHLP (92 aa)) is one Solcar 1 repeat. Transmembrane regions (helical) follow at residues 101-121 (FGIG…CIVL), 161-181 (MGST…LSEF), 197-217 (IGGH…FYSA), 256-276 (LLPL…HYII), 312-332 (FPEL…LYPL), and 381-401 (LGFY…AIVL). The stretch at 309-414 (EDYFPELIAN…KIIYSSVVQT (106 aa)) is one Solcar 2 repeat.

Belongs to the mitochondrial carrier (TC 2.A.29) family.

It is found in the mitochondrion outer membrane. In terms of biological role, may play a role in mitochondrial dynamics by controlling mitochondrial membrane fission. The protein is Solute carrier family 25 member 46 (slc25a46) of Xenopus tropicalis (Western clawed frog).